The sequence spans 107 residues: Large ribosomal subunit protein mL55 (107 aa).

A mitochondrion-targeting transit peptide spans 1–16 (MLLKQLPQAVQQIRCI).

Belongs to the mitochondrion-specific ribosomal protein mL55 family. In terms of assembly, component of the mitochondrial ribosome large subunit (39S) which comprises a 16S rRNA and about 50 distinct proteins. As to expression, ubiquitously expressed (at protein level).

It is found in the mitochondrion. Functionally, involved in mitochondrial biogenesis and G2/M phase cell cycle progression. The sequence is that of Large ribosomal subunit protein mL55 (mRpL55) from Drosophila melanogaster (Fruit fly).